The primary structure comprises 185 residues: Ribosome-recycling factor (185 aa).

Positions 138 to 185 are disordered; that stretch reads ALKKQEKDGEITEDEERRLEKEVQKVTDESTKKIDQMADNKRKEIIQG.

This sequence belongs to the RRF family.

The protein resides in the cytoplasm. Its function is as follows. Responsible for the release of ribosomes from messenger RNA at the termination of protein biosynthesis. May increase the efficiency of translation by recycling ribosomes from one round of translation to another. The polypeptide is Ribosome-recycling factor (Lactobacillus delbrueckii subsp. bulgaricus (strain ATCC 11842 / DSM 20081 / BCRC 10696 / JCM 1002 / NBRC 13953 / NCIMB 11778 / NCTC 12712 / WDCM 00102 / Lb 14)).